The chain runs to 278 residues: Undecaprenyl-diphosphatase (278 aa).

8 consecutive transmembrane segments (helical) span residues 3-23, 42-62, 88-108, 112-132, 152-172, 190-210, 225-245, and 253-273; these read YILI…IPIS, VAYS…IFYF, FLVI…LFVI, ILGL…IVIY, IIIV…RSGM, LSFI…VLFS, GLLI…NALL, and VVLL…LSDI.

Belongs to the UppP family.

Its subcellular location is the cell membrane. It carries out the reaction di-trans,octa-cis-undecaprenyl diphosphate + H2O = di-trans,octa-cis-undecaprenyl phosphate + phosphate + H(+). Its function is as follows. Catalyzes the dephosphorylation of undecaprenyl diphosphate (UPP). This Saccharolobus solfataricus (strain ATCC 35092 / DSM 1617 / JCM 11322 / P2) (Sulfolobus solfataricus) protein is Undecaprenyl-diphosphatase.